Consider the following 253-residue polypeptide: Large ribosomal subunit protein uL4 (253 aa).

The segment at 62 to 107 is disordered; that stretch reads WGSGRGVSHVPRLKNSSRAARVPHAKGGRRAHPPKPEADRSEKVNT. A compositionally biased stretch (basic residues) spans 82 to 94; it reads RVPHAKGGRRAHP. Residues 95-107 show a composition bias toward basic and acidic residues; the sequence is PKPEADRSEKVNT.

Belongs to the universal ribosomal protein uL4 family. In terms of assembly, part of the 50S ribosomal subunit.

One of the primary rRNA binding proteins, this protein initially binds near the 5'-end of the 23S rRNA. It is important during the early stages of 50S assembly. It makes multiple contacts with different domains of the 23S rRNA in the assembled 50S subunit and ribosome. Its function is as follows. Forms part of the polypeptide exit tunnel. The sequence is that of Large ribosomal subunit protein uL4 from Methanosarcina mazei (strain ATCC BAA-159 / DSM 3647 / Goe1 / Go1 / JCM 11833 / OCM 88) (Methanosarcina frisia).